Consider the following 886-residue polypeptide: Extended synaptotagmin-3 (886 aa).

The tract at residues 1 to 21 (MRAEEPCAPGAPSALGAQRTP) is disordered. Residues 1–29 (MRAEEPCAPGAPSALGAQRTPGPELRLSS) lie on the Cytoplasmic side of the membrane. 2 consecutive transmembrane segments (helical) span residues 30–50 (QLLP…GPVY) and 51–71 (LAGY…LWMW). Over 72–886 (WRRNRRGKLG…ELTPNGQPRS (815 aa)) the chain is Cytoplasmic. An SMP-LTD domain is found at 114-291 (DVERVEWANK…LPNRVTVPVK (178 aa)). 2 C2 domains span residues 291–408 (KKGL…DEWF) and 426–566 (SLLT…QLDH). 9 residues coordinate Ca(2+): K321, D322, D332, D379, E380, D381, D383, D385, and D386. The interval 613-673 (QGPKAQPQEE…PEPKGKDSAK (61 aa)) is disordered. The segment covering 642–659 (RSTTTTTSATTVATEPTS) has biased composition (low complexity). Residues 664-673 (PEPKGKDSAK) are compositionally biased toward basic and acidic residues. Residues 754-876 (QLGEIQLTVR…DLIKGFSQWY (123 aa)) form the C2 3 domain. The interval 801–808 (RKWACRKK) is required for phosphatidylinositol 4,5-bisphosphate-dependent location at the cell membrane.

The protein belongs to the extended synaptotagmin family. Interacts with ESYT1 and ESYT2. As to expression, widely expressed with high level in cerebellum and skin.

It localises to the cell membrane. The protein resides in the endoplasmic reticulum membrane. Functionally, binds glycerophospholipids in a barrel-like domain and may play a role in cellular lipid transport. Tethers the endoplasmic reticulum to the cell membrane and promotes the formation of appositions between the endoplasmic reticulum and the cell membrane. The chain is Extended synaptotagmin-3 from Homo sapiens (Human).